The primary structure comprises 143 residues: Transcriptional regulator MraZ (143 aa).

SpoVT-AbrB domains are found at residues 5 to 47 (TYTP…PKEE) and 76 to 119 (ADEQ…DAQA).

It belongs to the MraZ family. Forms oligomers.

Its subcellular location is the cytoplasm. The protein resides in the nucleoid. The sequence is that of Transcriptional regulator MraZ from Corynebacterium glutamicum (strain R).